Reading from the N-terminus, the 198-residue chain is dCTP deaminase, dUMP-forming (198 aa).

Residues lysine 115–arginine 120, aspartate 133, threonine 141–glutamate 143, glutamine 162, tyrosine 175, and lysine 184 each bind dCTP. Glutamate 143 (proton donor/acceptor) is an active-site residue.

The protein belongs to the dCTP deaminase family. In terms of assembly, homotrimer.

It carries out the reaction dCTP + 2 H2O = dUMP + NH4(+) + diphosphate. Its pathway is pyrimidine metabolism; dUMP biosynthesis; dUMP from dCTP: step 1/1. Its function is as follows. Bifunctional enzyme that catalyzes both the deamination of dCTP to dUTP and the hydrolysis of dUTP to dUMP without releasing the toxic dUTP intermediate. The sequence is that of dCTP deaminase, dUMP-forming from Nanoarchaeum equitans (strain Kin4-M).